The following is an 81-amino-acid chain: uncharacterized protein (81 aa).

This is an uncharacterized protein from Bacillus anthracis.